The primary structure comprises 336 residues: Fructose-1,6-bisphosphatase class 1 (336 aa).

Mg(2+) contacts are provided by Glu-90, Asp-112, Leu-114, and Asp-115. Substrate-binding positions include 115-118, Asn-211, and Lys-277; that span reads DGSS. Glu-283 provides a ligand contact to Mg(2+).

It belongs to the FBPase class 1 family. Homotetramer. The cofactor is Mg(2+).

The protein localises to the cytoplasm. It catalyses the reaction beta-D-fructose 1,6-bisphosphate + H2O = beta-D-fructose 6-phosphate + phosphate. The protein operates within carbohydrate biosynthesis; gluconeogenesis. In Stutzerimonas stutzeri (strain A1501) (Pseudomonas stutzeri), this protein is Fructose-1,6-bisphosphatase class 1.